Reading from the N-terminus, the 163-residue chain is MSEQGRETEEEEGGGGASDTAPMLPRGPPDHQASALTCPGWSGPPLLPGRLLAGLLLHLLLPAAAFLLVLLPAAAVVYLGFLCHSRVHPAPGPRCRALFSDRGSAALIVFGLLSLPPLLVLASAVRARLARRLRPLLPPPAGTPGPRRPPGRPDEDEQLCAWV.

The segment at Met1–Thr37 is disordered. 2 helical membrane-spanning segments follow: residues Leu51–Leu71 and Ala105–Val125. A compositionally biased stretch (pro residues) spans Leu136 to Arg148. Residues Leu136–Asp156 are disordered.

Belongs to the TMEM88 family.

The protein resides in the membrane. The polypeptide is Transmembrane protein 278 (Homo sapiens (Human)).